We begin with the raw amino-acid sequence, 232 residues long: 2-C-methyl-D-erythritol 4-phosphate cytidylyltransferase (232 aa).

The protein belongs to the IspD/TarI cytidylyltransferase family. IspD subfamily.

It carries out the reaction 2-C-methyl-D-erythritol 4-phosphate + CTP + H(+) = 4-CDP-2-C-methyl-D-erythritol + diphosphate. The protein operates within isoprenoid biosynthesis; isopentenyl diphosphate biosynthesis via DXP pathway; isopentenyl diphosphate from 1-deoxy-D-xylulose 5-phosphate: step 2/6. Catalyzes the formation of 4-diphosphocytidyl-2-C-methyl-D-erythritol from CTP and 2-C-methyl-D-erythritol 4-phosphate (MEP). The protein is 2-C-methyl-D-erythritol 4-phosphate cytidylyltransferase of Vibrio cholerae serotype O1 (strain ATCC 39315 / El Tor Inaba N16961).